A 201-amino-acid polypeptide reads, in one-letter code: UPF0637 protein LCA_0842 (201 aa).

The protein belongs to the UPF0637 family.

This is UPF0637 protein LCA_0842 from Latilactobacillus sakei subsp. sakei (strain 23K) (Lactobacillus sakei subsp. sakei).